A 712-amino-acid chain; its full sequence is 3',5'-cyclic-AMP phosphodiesterase 4C (712 aa).

2 disordered regions span residues 1 to 31 (MENL…APKH) and 45 to 64 (RFYS…LSPR). The span at 17 to 31 (SRSRGRHSMTRAPKH) shows a compositional bias: basic residues. A compositionally biased stretch (basic and acidic residues) spans 48-64 (SDPDKSAGCRERDLSPR). Ser-73 carries the phosphoserine modification. Positions 181–200 (AKQGPVGNPSSSNQLPPAED) are disordered. Residues 312–641 (VQTDQEEQLA…EWYQSKIPRS (330 aa)) form the PDEase domain. The active-site Proton donor is the His-388. His-388 lines the 3',5'-cyclic AMP pocket. 2 residues coordinate AMP: His-388 and His-392. The Zn(2+) site is built by His-392, His-428, Asp-429, and Asp-546. Asp-429, Asp-546, Gln-597, and Phe-600 together coordinate AMP. Residue Asp-429 participates in Mg(2+) binding. Asp-429 contributes to the Mn(2+) binding site. 3',5'-cyclic AMP contacts are provided by Gln-597 and Phe-600. Disordered regions lie at residues 636 to 655 (SKIP…GPDR) and 664 to 712 (EAEE…NQRT). Ser-641 carries the phosphoserine modification. Residues 664-678 (EAEEEDEEEEEEGEE) are compositionally biased toward acidic residues.

It belongs to the cyclic nucleotide phosphodiesterase family. PDE4 subfamily. In terms of assembly, part of a complex containing AKAP5, ADCY5, ADCY6 and PKD2. Zn(2+) serves as cofactor. The cofactor is Mg(2+). Requires Mn(2+) as cofactor. As to expression, expressed in various tissues but not in cells of the immune system.

The protein localises to the cell projection. The protein resides in the cilium. It carries out the reaction 3',5'-cyclic AMP + H2O = AMP + H(+). It participates in purine metabolism; 3',5'-cyclic AMP degradation; AMP from 3',5'-cyclic AMP: step 1/1. With respect to regulation, inhibited by rolipram. Hydrolyzes the second messenger cAMP, which is a key regulator of many important physiological processes. The chain is 3',5'-cyclic-AMP phosphodiesterase 4C from Homo sapiens (Human).